The sequence spans 327 residues: Ribonucleoside-diphosphate reductase small chain (327 aa).

Positions 70, 101, and 104 each coordinate Fe cation. The active site involves Tyr108. Fe cation contacts are provided by Glu164, Glu198, and His201.

It belongs to the ribonucleoside diphosphate reductase small chain family. In terms of assembly, heterotetramer composed of a homodimer of the large subunit (R1) and a homodimer of the small subunit (R2). Larger multisubunit protein complex are also active, composed of (R1)n(R2)n. Requires Fe cation as cofactor.

It catalyses the reaction a 2'-deoxyribonucleoside 5'-diphosphate + [thioredoxin]-disulfide + H2O = a ribonucleoside 5'-diphosphate + [thioredoxin]-dithiol. Its function is as follows. Ribonucleoside-diphosphate reductase holoenzyme provides the precursors necessary for viral DNA synthesis. Allows virus growth in non-dividing cells. Catalyzes the biosynthesis of deoxyribonucleotides from the corresponding ribonucleotides. This is Ribonucleoside-diphosphate reductase small chain from African swine fever virus (isolate Tick/Malawi/Lil 20-1/1983) (ASFV).